We begin with the raw amino-acid sequence, 215 residues long: Octanoyltransferase (215 aa).

The BPL/LPL catalytic domain occupies 31-206; it reads TDAPDEVWLV…QLVKHLDYAE (176 aa). Residues 70 to 77, 137 to 139, and 150 to 152 each bind substrate; these read RGGQVTYH, SLG, and GLA. Catalysis depends on Cys168, which acts as the Acyl-thioester intermediate.

This sequence belongs to the LipB family.

The protein localises to the cytoplasm. It catalyses the reaction octanoyl-[ACP] + L-lysyl-[protein] = N(6)-octanoyl-L-lysyl-[protein] + holo-[ACP] + H(+). The protein operates within protein modification; protein lipoylation via endogenous pathway; protein N(6)-(lipoyl)lysine from octanoyl-[acyl-carrier-protein]: step 1/2. Its function is as follows. Catalyzes the transfer of endogenously produced octanoic acid from octanoyl-acyl-carrier-protein onto the lipoyl domains of lipoate-dependent enzymes. Lipoyl-ACP can also act as a substrate although octanoyl-ACP is likely to be the physiological substrate. This is Octanoyltransferase from Pseudomonas fluorescens (strain ATCC BAA-477 / NRRL B-23932 / Pf-5).